Reading from the N-terminus, the 198-residue chain is 8-oxoguanine DNA glycosylase/AP lyase (198 aa).

Active-site residues include lysine 122 and aspartate 140.

Belongs to the type-2 OGG1 family. Monomer.

It catalyses the reaction 2'-deoxyribonucleotide-(2'-deoxyribose 5'-phosphate)-2'-deoxyribonucleotide-DNA = a 3'-end 2'-deoxyribonucleotide-(2,3-dehydro-2,3-deoxyribose 5'-phosphate)-DNA + a 5'-end 5'-phospho-2'-deoxyribonucleoside-DNA + H(+). Its function is as follows. Catalyzes the excision of an oxidatively damaged form of guanine (7,8-dihydro-8-oxoguanine = 8-oxoG) from DNA. Also cleaves the DNA backbone at apurinic/apyrimidinic sites (AP sites). Efficiently cleaves oligomers containing 8-oxoG:C and 8-oxoG:G base pairs, and is less effective on oligomers containing 8-oxoG:T and 8-oxoG:A mispairs. This Archaeoglobus fulgidus (strain ATCC 49558 / DSM 4304 / JCM 9628 / NBRC 100126 / VC-16) protein is 8-oxoguanine DNA glycosylase/AP lyase.